The primary structure comprises 291 residues: Deaminated glutathione amidase (291 aa).

The CN hydrolase domain maps to 13–268; sequence KRIGLGQITS…NDIAFVDIDL (256 aa). The active-site Proton acceptor is the Glu52. The Proton donor role is filled by Lys130. Cys172 functions as the Nucleophile in the catalytic mechanism.

This sequence belongs to the carbon-nitrogen hydrolase superfamily. NIT1/NIT2 family.

It catalyses the reaction N-(4-oxoglutaryl)-L-cysteinylglycine + H2O = L-cysteinylglycine + 2-oxoglutarate. Catalyzes the hydrolysis of the amide bond in N-(4-oxoglutarate)-L-cysteinylglycine (deaminated glutathione), a metabolite repair reaction to dispose of the harmful deaminated glutathione. The chain is Deaminated glutathione amidase (nit1-1) from Dictyostelium discoideum (Social amoeba).